A 442-amino-acid polypeptide reads, in one-letter code: Magnesium transporter MRS2-1 (442 aa).

The interval 1 to 30 is disordered; the sequence is MSELKERLLPPRPASAMNLRDASVTRPSAS. 2 helical membrane-spanning segments follow: residues 378–398 and 414–434; these read LLLTTATFVVAIFGVVAGIFG and WVLIITGVCGFVIFSAFVWFF. Positions 398–400 match the Required for magnesium transport activity motif; the sequence is GMN.

It belongs to the CorA metal ion transporter (MIT) (TC 1.A.35.5) family. Expressed in the whole plant except stems.

It is found in the membrane. Its function is as follows. Magnesium transporter that may mediate the influx of magnesium. This chain is Magnesium transporter MRS2-1 (MRS2-1), found in Arabidopsis thaliana (Mouse-ear cress).